The chain runs to 133 residues: Large ribosomal subunit protein uL15 (133 aa).

Positions 1–62 (MALHNLQPAP…GQQPLQRRLP (62 aa)) are disordered. Polar residues predominate over residues 32–45 (TRGQKGQKSRTGYS).

Belongs to the universal ribosomal protein uL15 family. In terms of assembly, part of the 50S ribosomal subunit.

Functionally, binds to the 23S rRNA. The protein is Large ribosomal subunit protein uL15 of Nitratiruptor sp. (strain SB155-2).